Consider the following 109-residue polypeptide: MSITDILSADDIAAALQECQDPDTFEPQKFFQTSGLSKMSASQLKDIFQFIDNDQSGYLDEDELKYFLQRFQSDARELTESETKSLMDAADNDGDGKIGADEFQEMVHS.

The residue at position 2 (serine 2) is an N-acetylserine. 2 consecutive EF-hand domains span residues 39 to 74 (MSAS…FQSD) and 78 to 109 (LTES…MVHS). 10 residues coordinate Ca(2+): aspartate 52, aspartate 54, serine 56, tyrosine 58, glutamate 63, aspartate 91, aspartate 93, aspartate 95, lysine 97, and glutamate 102. The disordered stretch occupies residues 82–109 (ETKSLMDAADNDGDGKIGADEFQEMVHS). Basic and acidic residues predominate over residues 94-109 (GDGKIGADEFQEMVHS).

This sequence belongs to the parvalbumin family. In terms of tissue distribution, found in tumor tissues and not detected in normal tissues.

Functionally, has some calmodulin-like activity with respect to enzyme activation and growth regulation. Binds two calcium ions. This Mus musculus (Mouse) protein is Oncomodulin (Ocm).